We begin with the raw amino-acid sequence, 316 residues long: Ferrochelatase (316 aa).

Residues His188 and Glu269 each contribute to the Fe cation site.

Belongs to the ferrochelatase family.

Its subcellular location is the cytoplasm. The catalysed reaction is heme b + 2 H(+) = protoporphyrin IX + Fe(2+). It participates in porphyrin-containing compound metabolism; protoheme biosynthesis; protoheme from protoporphyrin-IX: step 1/1. Functionally, catalyzes the ferrous insertion into protoporphyrin IX. This Wolinella succinogenes (strain ATCC 29543 / DSM 1740 / CCUG 13145 / JCM 31913 / LMG 7466 / NCTC 11488 / FDC 602W) (Vibrio succinogenes) protein is Ferrochelatase.